Here is a 1142-residue protein sequence, read N- to C-terminus: Protein kinase C-like (1142 aa).

The REM-1 1 domain maps to 1–67 (MNDEDKVHDI…LRELQMRRLG (67 aa)). The segment at 70–139 (VDNMSLGASP…PPDSNVPRAR (70 aa)) is disordered. Residues 149–226 (KFDTPHLGPR…LKRYEELHID (78 aa)) enclose the REM-1 2 domain. In terms of domain architecture, C2 spans 231–349 (GPDDDSINLP…LRRKKIEAEM (119 aa)). Positions 357-403 (ADRVGSRAPPPQFPMGAQSPQFAAPPTSPGSQEQNTMIPPQAPPPSQ) are disordered. A compositionally biased stretch (polar residues) spans 385–394 (PGSQEQNTMI). Phorbol-ester/DAG-type zinc fingers lie at residues 457–505 (GHKF…VTKC) and 525–576 (PHRF…PDFC). Disordered regions lie at residues 592–622 (TQKK…SGSI) and 651–807 (SQTT…TDPG). Over residues 613–622 (SKTSISSGSI) the composition is skewed to polar residues. 3 stretches are compositionally biased toward low complexity: residues 663–677 (TSTS…AAAA), 712–724 (SAQQ…SPQQ), and 741–765 (PQAR…MYQQ). Positions 817-1076 (FNFLAVLGKG…AQEIMSQPFF (260 aa)) constitute a Protein kinase domain. ATP-binding positions include 823–831 (LGKGNFGKV) and K846. D942 acts as the Proton acceptor in catalysis. The AGC-kinase C-terminal domain maps to 1077–1142 (RNINWDDIYH…RGFSYTADFE (66 aa)).

The protein belongs to the protein kinase superfamily. AGC Ser/Thr protein kinase family. PKC subfamily.

The catalysed reaction is L-seryl-[protein] + ATP = O-phospho-L-seryl-[protein] + ADP + H(+). It catalyses the reaction L-threonyl-[protein] + ATP = O-phospho-L-threonyl-[protein] + ADP + H(+). In Neurospora crassa (strain ATCC 24698 / 74-OR23-1A / CBS 708.71 / DSM 1257 / FGSC 987), this protein is Protein kinase C-like.